The chain runs to 498 residues: Probable FAD-binding monooxygenase AlmA (498 aa).

A helical membrane pass occupies residues 4–24; it reads HIDILIVGAGISGIGIAAHLS. Residues Ser15, Glu36, Asp56, Phe62, and Val104 each contribute to the FAD site. 54 to 56 lines the NADP(+) pocket; the sequence is RSD. NADP(+) contacts are provided by residues 184–190, 208–209, and 292–293; these read SGATAIT, RS, and RL. Val395 serves as a coordination point for FAD.

It belongs to the FAD-binding monooxygenase family. It depends on FAD as a cofactor.

It localises to the cell membrane. It participates in hydrocarbon metabolism; alkane degradation. Functionally, is able to catalyze the degradation of n-alkanes with C chain lengths of 32 and 36. Probably allows Acinetobacter baylyi strain ADP1 to grow on the long-chain n-alkane dotriacontane (C32H66) as a sole carbon source. This is Probable FAD-binding monooxygenase AlmA from Acinetobacter baylyi (strain ATCC 33305 / BD413 / ADP1).